A 96-amino-acid polypeptide reads, in one-letter code: Defensin-like protein 69 (96 aa).

Residues 1–19 form the signal peptide; the sequence is MGSSKLLVAFTLIVMMTIS. Disulfide bonds link Cys-37/Cys-86, Cys-41/Cys-64, Cys-50/Cys-84, and Cys-54/Cys-85.

It belongs to the DEFL family.

The protein localises to the secreted. The sequence is that of Defensin-like protein 69 from Arabidopsis thaliana (Mouse-ear cress).